Reading from the N-terminus, the 94-residue chain is Large ribosomal subunit protein bL27 (94 aa).

Positions 1-9 (MLELNLQLF) are excised as a propeptide. Positions 12–33 (KKGGGSTSNGRDSQAKRLGAKA) are disordered.

The protein belongs to the bacterial ribosomal protein bL27 family. Post-translationally, the N-terminus is cleaved by ribosomal processing cysteine protease Prp.

This is Large ribosomal subunit protein bL27 from Lactococcus lactis subsp. cremoris (strain MG1363).